A 212-amino-acid chain; its full sequence is Hevein-like preproprotein (212 aa).

An N-terminal signal peptide occupies residues methionine 1 to glycine 21. The region spanning glutamine 22–glycine 64 is the Chitin-binding type-1 domain. Cystine bridges form between cysteine 24-cysteine 39, cysteine 33-cysteine 45, cysteine 38-cysteine 52, cysteine 58-cysteine 62, cysteine 100-cysteine 132, cysteine 121-cysteine 155, and cysteine 135-cysteine 191. Positions glutamate 72 to asparagine 193 constitute a Barwin domain.

In terms of assembly, CB-HEL interacts strongly with a fungal fruiting body lectin.

Its subcellular location is the vacuole. Fungal growth inhibitors. Neither CB-HEL nor CD-HEL have chitinase activity, but both have antimicrobial activities. CD-HEL has RNase, but no DNase activity. The protein is Hevein-like preproprotein (HEL) of Arabidopsis thaliana (Mouse-ear cress).